A 131-amino-acid polypeptide reads, in one-letter code: Phosphoribosyl-ATP pyrophosphatase 2 (131 aa).

The tract at residues 105 to 131 is disordered; sequence RIGKPAAPHATRRPVIPQEARAVRKHR.

The protein belongs to the PRA-PH family.

It localises to the cytoplasm. The catalysed reaction is 1-(5-phospho-beta-D-ribosyl)-ATP + H2O = 1-(5-phospho-beta-D-ribosyl)-5'-AMP + diphosphate + H(+). It functions in the pathway amino-acid biosynthesis; L-histidine biosynthesis; L-histidine from 5-phospho-alpha-D-ribose 1-diphosphate: step 2/9. This Rhodopseudomonas palustris (strain ATCC BAA-98 / CGA009) protein is Phosphoribosyl-ATP pyrophosphatase 2 (hisE2).